Reading from the N-terminus, the 625-residue chain is E3 ubiquitin-protein ligase synoviolin (625 aa).

Over 1–4 (MVRA) the chain is Cytoplasmic. The chain crosses the membrane as a helical span at residues 5 to 25 (ALVTATSLALTGAVVAHAYFL). Residues 26 to 40 (KHQFYPTVVYLTKSS) are Lumenal-facing. Residues 41-61 (PSMAVLYIQAFVLVFLLGKLM) form a helical membrane-spanning segment. The Cytoplasmic segment spans residues 62-98 (RKVFFGQLRAAEMEHLIERSWYAVTETCLAFTVFRDD). A helical transmembrane segment spans residues 99–119 (FSPRFVALFTLLLFLKCFHWL). Residues 120–135 (AEDRVDFMERSPNISW) are Lumenal-facing. A helical membrane pass occupies residues 136 to 156 (VFHFRVLSLMVLLGVMDFLFV). Topologically, residues 157–169 (NHACHSIITRGAS) are cytoplasmic. The helical transmembrane segment at 170–190 (VQLVFGFEYAILMTMVLTTFI) threads the bilayer. The Lumenal segment spans residues 191–212 (KYTLHTIDLQSENPWDNKAVYM). Residues 213-235 (LYTELFTGFIKVLLYMAFMTIMI) traverse the membrane as a helical segment. An interaction with p53/TP53 region spans residues 236–270 (KVHTFPLFAIRPMYLAMRQFKKAVTDAIMSRRAIR). Residues 236-625 (KVHTFPLFAI…GNLLKLASVN (390 aa)) are Cytoplasmic-facing. 8 residues coordinate Zn(2+): cysteine 291, cysteine 294, cysteine 307, histidine 309, histidine 312, cysteine 315, cysteine 326, and cysteine 329. The segment at 291 to 330 (CIICREEMVTGAKKLPCNHIFHSSCLRSWFQRQQTCPTCR) adopts an RING-type; atypical zinc-finger fold. 4 disordered regions span residues 337 to 361 (SQPNQTPAPPAAQAPAPPAPANAPI), 390 to 434 (PPPA…SAAP), 462 to 487 (FMSSMPPPPSSLSSMSEAELRELEQE), and 523 to 625 (LSPP…ASVN). Pro residues predominate over residues 342-361 (TPAPPAAQAPAPPAPANAPI). The segment covering 423 to 434 (AQSTAEAASAAP) has biased composition (low complexity). Positions 462–471 (FMSSMPPPPS) are enriched in pro residues. Residues 523-564 (LSPPRSETNTGETSESANVESSPSTANTETAGQEIQSQSGES) are compositionally biased toward polar residues.

The protein belongs to the HRD1 family. Homodimer.

It localises to the endoplasmic reticulum membrane. It catalyses the reaction S-ubiquitinyl-[E2 ubiquitin-conjugating enzyme]-L-cysteine + [acceptor protein]-L-lysine = [E2 ubiquitin-conjugating enzyme]-L-cysteine + N(6)-ubiquitinyl-[acceptor protein]-L-lysine.. The protein operates within protein modification; protein ubiquitination. Functionally, E3 ubiquitin-protein ligase which accepts ubiquitin specifically from endoplasmic reticulum-associated UBC7 E2 ligase and transfers it to substrates, promoting their degradation. Component of the endoplasmic reticulum quality control (ERQC) system also called ER-associated degradation (ERAD) involved in ubiquitin-dependent degradation of misfolded endoplasmic reticulum proteins. Also promotes the degradation of normal but naturally short-lived proteins. Protects cells from ER stress-induced apoptosis. Sequesters p53 in the cytoplasm and promotes its degradation, thereby negatively regulating its biological function in transcription, cell cycle regulation and apoptosis. The protein is E3 ubiquitin-protein ligase synoviolin (syvn1) of Danio rerio (Zebrafish).